The following is a 221-amino-acid chain: Glutathione S-transferase (221 aa).

Met1 bears the N-acetylmethionine mark. Position 2 is an N-acetylalanine; in Glutathione S-transferase, N-terminally processed (Ala2). In terms of domain architecture, GST N-terminal spans 3–82 (GEQNIKYFNI…YIAEKYNLLG (80 aa)). Glutathione contacts are provided by residues Tyr9, Lys45, 53-54 (QV), and 66-67 (QT). Residues 84-208 (DMKEHAQIIM…PGSKRKPVPD (125 aa)) form the GST C-terminal domain.

Belongs to the GST superfamily. Alpha family. As to quaternary structure, homodimer or heterodimer of GSTA1 and GSTA2.

The protein resides in the cytoplasm. The enzyme catalyses RX + glutathione = an S-substituted glutathione + a halide anion + H(+). It carries out the reaction prostaglandin A2 + glutathione = prostaglandin A2-S-(R)-glutathione. It catalyses the reaction prostaglandin J2 + glutathione = prostaglandin J2-S-(R)-glutathione. The catalysed reaction is (13S)-hydroperoxy-(9Z,11E)-octadecadienoate + 2 glutathione = (13S)-hydroxy-(9Z,11E)-octadecadienoate + glutathione disulfide + H2O. The enzyme catalyses androst-5-ene-3,17-dione = androst-4-ene-3,17-dione. Functionally, glutathione S-transferase that catalyzes the nucleophilic attack of the sulfur atom of glutathione on the electrophilic groups of a wide range of exogenous and endogenous compounds. Involved in the formation of glutathione conjugates of both prostaglandin A2 (PGA2) and prostaglandin J2 (PGJ2). It also catalyzes the isomerization of D5-androstene-3,17-dione (AD) into D4-androstene-3,17-dione and may therefore play an important role in hormone biosynthesis. Through its glutathione-dependent peroxidase activity toward the fatty acid hydroperoxide (13S)-hydroperoxy-(9Z,11E)-octadecadienoate/13-HPODE it is also involved in the metabolism of oxidized linoleic acid. The protein is Glutathione S-transferase of Antechinus stuartii (Brown marsupial mouse).